A 224-amino-acid polypeptide reads, in one-letter code: Ribose-5-phosphate isomerase A (224 aa).

Substrate is bound by residues 26–29, 81–84, and 94–97; these read TGST, DGAD, and KGGG. Glutamate 103 functions as the Proton acceptor in the catalytic mechanism. Lysine 121 serves as a coordination point for substrate.

It belongs to the ribose 5-phosphate isomerase family. As to quaternary structure, homodimer.

It catalyses the reaction aldehydo-D-ribose 5-phosphate = D-ribulose 5-phosphate. Its pathway is carbohydrate degradation; pentose phosphate pathway; D-ribose 5-phosphate from D-ribulose 5-phosphate (non-oxidative stage): step 1/1. Its function is as follows. Catalyzes the reversible conversion of ribose-5-phosphate to ribulose 5-phosphate. The chain is Ribose-5-phosphate isomerase A from Listeria monocytogenes serovar 1/2a (strain ATCC BAA-679 / EGD-e).